Here is a 184-residue protein sequence, read N- to C-terminus: Cell wall protein phiA (184 aa).

The signal sequence occupies residues 1–21 (MQLKNLIFAAATAAALPATDA). The N-linked (GlcNAc...) asparagine glycan is linked to asparagine 58.

The protein belongs to the phiA family.

It is found in the secreted. The protein localises to the cell wall. Functionally, cell wall protein involved in development of asexual structures such as phialide and conidium development, and thus required for spore formation. Plays a role as a general stress protectant produced by the fungus in competition with antagonistic bacteria. This is Cell wall protein phiA from Aspergillus niger (strain ATCC MYA-4892 / CBS 513.88 / FGSC A1513).